The chain runs to 403 residues: Tyrosine--tRNA ligase (403 aa).

A 'HIGH' region motif is present at residues 42-51; sequence PTAPDLHLGH. Residues 226 to 230 carry the 'KMSKS' region motif; it reads KMSKS. Lys-229 is a binding site for ATP. In terms of domain architecture, S4 RNA-binding spans 339 to 400; the sequence is LRLAGLLTAA…GKRNFARVSL (62 aa).

The protein belongs to the class-I aminoacyl-tRNA synthetase family. TyrS type 2 subfamily. Homodimer.

It is found in the cytoplasm. It carries out the reaction tRNA(Tyr) + L-tyrosine + ATP = L-tyrosyl-tRNA(Tyr) + AMP + diphosphate + H(+). In terms of biological role, catalyzes the attachment of tyrosine to tRNA(Tyr) in a two-step reaction: tyrosine is first activated by ATP to form Tyr-AMP and then transferred to the acceptor end of tRNA(Tyr). This Xanthomonas axonopodis pv. citri (strain 306) protein is Tyrosine--tRNA ligase.